A 518-amino-acid chain; its full sequence is Glutamate--cysteine ligase (518 aa).

Belongs to the glutamate--cysteine ligase type 1 family. Type 1 subfamily.

It catalyses the reaction L-cysteine + L-glutamate + ATP = gamma-L-glutamyl-L-cysteine + ADP + phosphate + H(+). Its pathway is sulfur metabolism; glutathione biosynthesis; glutathione from L-cysteine and L-glutamate: step 1/2. In Shigella boydii serotype 4 (strain Sb227), this protein is Glutamate--cysteine ligase.